We begin with the raw amino-acid sequence, 698 residues long: Vertnin (698 aa).

It belongs to the vertnin family.

It localises to the nucleus. Acts as a transcription factor that regulates development of thoracic vertebrae. In Sus scrofa (Pig), this protein is Vertnin (VRTN).